The sequence spans 1113 residues: Antigenic protein P1 (1113 aa).

Residues 7-27 (IIAVVAIASAIVTGVVVIVVV) form a helical membrane-spanning segment. N-linked (GlcNAc...) asparagine glycosylation is found at Asn-121, Asn-207, Asn-225, Asn-233, Asn-274, Asn-533, Asn-576, Asn-622, Asn-675, Asn-679, Asn-730, Asn-753, Asn-880, Asn-899, Asn-907, Asn-972, and Asn-995. The region spanning 159 to 473 (VFGQRAVAWA…SYVNMAHAFG (315 aa)) is the Peptidase M60 domain. One can recognise a PA14 domain in the interval 648–800 (LDPHQVEYEV…TEESSVDVSK (153 aa)).

The protein resides in the membrane. In Entamoeba histolytica (strain ATCC 30459 / HM-1:IMSS / ABRM), this protein is Antigenic protein P1.